Reading from the N-terminus, the 56-residue chain is PI-stichotoxin-Hmg3a (56 aa).

Residues 4–54 form the BPTI/Kunitz inhibitor domain; sequence CLEPKVVGPCKARIRRFYYDSETGKCTPFIYGGCGGNGNNFETLHACRGIC. Intrachain disulfides connect cysteine 4/cysteine 54, cysteine 13/cysteine 37, and cysteine 29/cysteine 50.

The protein belongs to the venom Kunitz-type family. Sea anemone type 2 potassium channel toxin subfamily. Contains three disulfide bonds.

The protein resides in the secreted. Its subcellular location is the nematocyst. Its function is as follows. Serine protease inhibitor that inhibits trypsin (Ki=50 nM) and probably also chymotrypsin (Kd=1.6 nM). Has an anti-inflammatory effect in LPS-activated macrophages in vitro, specifically reducing release of TNF and IL6 but not nitric oxide and reducing expression of IL1B precursor. The chain is PI-stichotoxin-Hmg3a from Heteractis magnifica (Magnificent sea anemone).